The sequence spans 95 residues: UPF0213 protein YPK_3712 (95 aa).

Residues 4–79 form the GIY-YIG domain; the sequence is SLWHLYLLRT…KQLSKQQKEK (76 aa).

It belongs to the UPF0213 family.

The protein is UPF0213 protein YPK_3712 of Yersinia pseudotuberculosis serotype O:3 (strain YPIII).